We begin with the raw amino-acid sequence, 485 residues long: UDP-N-acetylmuramoyl-L-alanyl-D-glutamate--2,6-diaminopimelate ligase (485 aa).

Ser30 contributes to the UDP-N-acetyl-alpha-D-muramoyl-L-alanyl-D-glutamate binding site. Gly113–Thr119 is a binding site for ATP. Residues Thr155–Thr156, Ser182, and Arg190 contribute to the UDP-N-acetyl-alpha-D-muramoyl-L-alanyl-D-glutamate site. Lys222 carries the N6-carboxylysine modification. Meso-2,6-diaminopimelate is bound by residues Arg381, Asp405–Arg408, Gly455, and Glu459. Positions Asp405–Arg408 match the Meso-diaminopimelate recognition motif motif.

The protein belongs to the MurCDEF family. MurE subfamily. The cofactor is Mg(2+). Post-translationally, carboxylation is probably crucial for Mg(2+) binding and, consequently, for the gamma-phosphate positioning of ATP.

The protein resides in the cytoplasm. The enzyme catalyses UDP-N-acetyl-alpha-D-muramoyl-L-alanyl-D-glutamate + meso-2,6-diaminopimelate + ATP = UDP-N-acetyl-alpha-D-muramoyl-L-alanyl-gamma-D-glutamyl-meso-2,6-diaminopimelate + ADP + phosphate + H(+). Its pathway is cell wall biogenesis; peptidoglycan biosynthesis. In terms of biological role, catalyzes the addition of meso-diaminopimelic acid to the nucleotide precursor UDP-N-acetylmuramoyl-L-alanyl-D-glutamate (UMAG) in the biosynthesis of bacterial cell-wall peptidoglycan. The chain is UDP-N-acetylmuramoyl-L-alanyl-D-glutamate--2,6-diaminopimelate ligase from Clostridium tetani (strain Massachusetts / E88).